The sequence spans 251 residues: Flap endonuclease Xni (251 aa).

Residue Asp-104 participates in Mg(2+) binding. In terms of domain architecture, 5'-3' exonuclease spans 160–249; that stretch reads VQPQQLPDYW…IDGNLQQLRL (90 aa). Residues Leu-171, Ala-172, Pro-180, Val-182, and Ile-185 each coordinate K(+). The interaction with DNA stretch occupies residues 184-189; sequence GIGPKS.

This sequence belongs to the Xni family. Mg(2+) serves as cofactor. It depends on K(+) as a cofactor.

Functionally, has flap endonuclease activity. During DNA replication, flap endonucleases cleave the 5'-overhanging flap structure that is generated by displacement synthesis when DNA polymerase encounters the 5'-end of a downstream Okazaki fragment. The sequence is that of Flap endonuclease Xni from Escherichia coli O139:H28 (strain E24377A / ETEC).